The following is a 490-amino-acid chain: 4-hydroxybutyryl-CoA dehydratase/vinylacetyl-CoA-Delta-isomerase (490 aa).

Residues C99 and C103 each contribute to the [4Fe-4S] cluster site. Residues 149 to 156 (MTDPKGDR) and 188 to 190 (HQT) contribute to the FAD site. 2 residues coordinate [4Fe-4S] cluster: H292 and C299. FAD-binding positions include H325 and 386–390 (DIAGG).

In terms of assembly, homotetramer. Requires FAD as cofactor. It depends on [4Fe-4S] cluster as a cofactor.

The enzyme catalyses 4-hydroxybutanoyl-CoA = (2E)-butenoyl-CoA + H2O. It catalyses the reaction vinylacetyl-CoA = (2E)-butenoyl-CoA. Catalyzes the reversible conversion of 4-hydroxybutyryl-CoA to crotonyl-CoA. The mechanism of the reaction seems to go through three steps: (1) the FAD-dependent oxidation of 4-hydroxybutyryl-CoA to 4-hydroxycrotonyl-CoA; (2) the hydroxyl group is substituted by a hydride derived from the now reduced FAD in an SN2' reaction leading to vinylacetyl-CoA; (3) isomerization to yield crotonyl-CoA. This is 4-hydroxybutyryl-CoA dehydratase/vinylacetyl-CoA-Delta-isomerase (abfD) from Clostridium aminobutyricum.